Consider the following 81-residue polypeptide: Exodeoxyribonuclease 7 small subunit (81 aa).

Belongs to the XseB family. Heterooligomer composed of large and small subunits.

The protein localises to the cytoplasm. It carries out the reaction Exonucleolytic cleavage in either 5'- to 3'- or 3'- to 5'-direction to yield nucleoside 5'-phosphates.. In terms of biological role, bidirectionally degrades single-stranded DNA into large acid-insoluble oligonucleotides, which are then degraded further into small acid-soluble oligonucleotides. The chain is Exodeoxyribonuclease 7 small subunit from Pseudomonas syringae pv. syringae (strain B728a).